Here is a 323-residue protein sequence, read N- to C-terminus: tRNA-dihydrouridine(16) synthase (323 aa).

FMN contacts are provided by residues 7 to 9 (PME) and Q68. Residue C98 is the Proton donor of the active site. Residues K139, 200–202 (NGE), and 224–225 (CR) contribute to the FMN site.

The protein belongs to the Dus family. DusC subfamily. FMN is required as a cofactor.

The enzyme catalyses 5,6-dihydrouridine(16) in tRNA + NADP(+) = uridine(16) in tRNA + NADPH + H(+). It carries out the reaction 5,6-dihydrouridine(16) in tRNA + NAD(+) = uridine(16) in tRNA + NADH + H(+). Its function is as follows. Catalyzes the synthesis of 5,6-dihydrouridine (D), a modified base found in the D-loop of most tRNAs, via the reduction of the C5-C6 double bond in target uridines. Specifically modifies U16 in tRNAs. This chain is tRNA-dihydrouridine(16) synthase, found in Vibrio cholerae serotype O1 (strain ATCC 39315 / El Tor Inaba N16961).